Consider the following 181-residue polypeptide: MFNRAVSRLSRKRPPSDIHDSDGSSSSSHQSLKSTAKWAASLENLLEDPEGVKRFREFLKKEFSEENVLFWLACEDFKKMQDKTQMQEKAKEIYMTFLSSKASSQVNVEGQSRLNEKILEEPHPLMFQKLQDQIFNLMKYDSYSRFLKSDLFLKHKRTEEEEEDLPDAQTAAKRASRIYNT.

The segment at 1-32 is disordered; it reads MFNRAVSRLSRKRPPSDIHDSDGSSSSSHQSL. Low complexity predominate over residues 23 to 32; sequence GSSSSSHQSL. Residues serine 24 and serine 41 each carry the phosphoserine modification. Residues 41–156 form the RGS domain; the sequence is SLENLLEDPE…LKSDLFLKHK (116 aa). Residue cysteine 74 is the site of S-palmitoyl cysteine attachment. A disordered region spans residues 158–181; that stretch reads TEEEEEDLPDAQTAAKRASRIYNT. Serine 176 is modified (phosphoserine).

As to quaternary structure, interacts with GNAZ, GNAI1 and GNAI3. Associates specifically with the activated, GTP-bound forms of GNAZ and GNAI3.

Its subcellular location is the cytoplasm. The protein localises to the cytosol. It localises to the nucleus. Functionally, regulates G protein-coupled receptor signaling cascades, including signaling downstream of the muscarinic acetylcholine receptor CHRM2. Inhibits signal transduction by increasing the GTPase activity of G protein alpha subunits, thereby driving them into their inactive GDP-bound form. Modulates the activity of potassium channels that are activated in response to CHRM2 signaling. Activity on GNAZ is inhibited by palmitoylation of the G-protein. This chain is Regulator of G-protein signaling 10 (RGS10), found in Homo sapiens (Human).